We begin with the raw amino-acid sequence, 249 residues long: Flavin-dependent thymidylate synthase (249 aa).

A ThyX domain is found at valine 8–serine 225. FAD contacts are provided by residues serine 62, arginine 86–arginine 88, and glutamine 94. Residues glutamine 83 to arginine 86, glutamine 94 to arginine 98, and arginine 164 each bind dUMP. A ThyX motif motif is present at residues arginine 86 to serine 96. FAD is bound by residues asparagine 180–arginine 182 and asparagine 186. Residue arginine 191 participates in dUMP binding. Arginine 191 serves as the catalytic Involved in ionization of N3 of dUMP, leading to its activation.

This sequence belongs to the thymidylate synthase ThyX family. Homotetramer. FAD is required as a cofactor.

The catalysed reaction is dUMP + (6R)-5,10-methylene-5,6,7,8-tetrahydrofolate + NADPH + H(+) = dTMP + (6S)-5,6,7,8-tetrahydrofolate + NADP(+). It participates in pyrimidine metabolism; dTTP biosynthesis. Catalyzes the reductive methylation of 2'-deoxyuridine-5'-monophosphate (dUMP) to 2'-deoxythymidine-5'-monophosphate (dTMP) while utilizing 5,10-methylenetetrahydrofolate (mTHF) as the methyl donor, and NADPH and FADH(2) as the reductant. This is Flavin-dependent thymidylate synthase from Clostridium tetani (strain Massachusetts / E88).